A 267-amino-acid chain; its full sequence is MNDFITETWLRANHTLSEGSEIHLPADARLTPSARELLESRRLRIKFLDPQGRLFVDDDEQQPQPVHGLTSSDTHPQACCELCRQPVVKKPDTLTHLTADKMVAKSDPRLGFRAALDSAIALTVWLQIELAEPWQPWLFDIRSRLGNIMRADAIDEPLAAQSIVGLNEDELHRLSHQPLRYLDHDHLVPEASHGRDAALLNLLRTKVRETETLAAQVFITRSFEVLRPDILQALNRLSSTVYVMMILSVAKHPLTVAQIQQRLGEKP.

A divalent metal cation is bound by residues cysteine 80 and cysteine 83.

Belongs to the Cob(I)alamin adenosyltransferase family. EutT subfamily. In terms of assembly, homodimer. It depends on a divalent metal cation as a cofactor.

It localises to the bacterial microcompartment. It carries out the reaction 2 cob(II)alamin + reduced [electron-transfer flavoprotein] + 2 ATP + 2 H2O = 2 adenosylcob(III)alamin + oxidized [electron-transfer flavoprotein] + 2 phosphate + 2 diphosphate + 3 H(+). The catalysed reaction is 2 cob(II)inamide + reduced [electron-transfer flavoprotein] + 2 ATP + 2 H2O = 2 adenosylcob(III)inamide + oxidized [electron-transfer flavoprotein] + 2 phosphate + 2 diphosphate + 3 H(+). It functions in the pathway amine and polyamine degradation; ethanolamine degradation. Converts cyanocobalamin (CN-B12) to adenosylcobalamin (AdoCbl), the inducer of the eut operon. Is not active on cobinamide nor other intermediates in the adenosylcobalamin synthetic pathway. Allows full induction of the eut operon. Can use ADP, CTP and dATP in place of ATP, and cobinamide in place of cobalamin, none are as efficiently used as ATP and cobalamin. Functionally, expression of the eut operon allows this bacteria to use ethanolamine (EA) as a carbon, nitrogen and energy source. It relies on cobalamin (vitamin B12) both as a cofactor for the ethanolamine ammonia-lyase (EAL) activity and to induce the operon. EA enhances bacterial survival in macrophages in a concentration-dependent manner, suggesting it is an important nutrient during infection. In Salmonella typhimurium (strain LT2 / SGSC1412 / ATCC 700720), this protein is Corrinoid adenosyltransferase EutT.